We begin with the raw amino-acid sequence, 368 residues long: MTTKFFIGTAIAVSVLSACSSLEERQIASGNFEYTKQQPGHDIQVPADVDRPNFSQAYKLPALDADAPRNFIGKKLKVVSPALVLPLVTGSHVDDGSKDAKVFFDQVDDSQPLDTTIWNSLLSYLEEQGIGIESFDKDKQRLVTDWVVAKEILDDHWYSWSSVERDTSQRFEFDLEMKPHGRTATLNAHLVDYKERQGEAVVAEKSDVDSRAKEVDILNKVIGHYEYQIRVADAKRLREIRRGMQITIGQDGEDAPAFIIDSNYDTAWPRVLLVLRKLGFDVKDYDKSNGLLFVKYNGTESGWWDSVWSNDENALPLEKQEYRFRVEDAGEHTSLTVLDNESTPFTKDKLSGLYDVFARVMADDNLDI.

The first 18 residues, 1 to 18, serve as a signal peptide directing secretion; it reads MTTKFFIGTAIAVSVLSA. The N-palmitoyl cysteine moiety is linked to residue C19. A lipid anchor (S-diacylglycerol cysteine) is attached at C19.

It belongs to the BamC family. In terms of assembly, part of the Bam complex.

It localises to the cell outer membrane. Its function is as follows. Part of the outer membrane protein assembly complex, which is involved in assembly and insertion of beta-barrel proteins into the outer membrane. This Pseudoalteromonas atlantica (strain T6c / ATCC BAA-1087) protein is Outer membrane protein assembly factor BamC.